Here is a 418-residue protein sequence, read N- to C-terminus: Zinc metalloproteinase nas-8 (418 aa).

The first 28 residues, 1–28 (MMNRASLCRIAVLLCILHLSHLIDSTYA), serve as a signal peptide directing secretion. Residues 29–100 (QSYLTEKDFL…TSKLKSGVRR (72 aa)) constitute a propeptide that is removed on maturation. In terms of domain architecture, Peptidase M12A spans 101–296 (NGVTSVIKRW…LKINKLYNCP (196 aa)). Disulfide bonds link Cys143/Cys295, Cys165/Cys184, Cys347/Cys381, Cys354/Cys374, and Cys361/Cys378. A Zn(2+)-binding site is contributed by His192. Residue Glu193 is part of the active site. Zn(2+) contacts are provided by His196 and His202. Residues 347–381 (CSDRTNLCWRWLDRCRSYFFEKIMKEFCALSCGYC) enclose the ShKT domain.

The cofactor is Zn(2+).

It localises to the secreted. The enzyme catalyses Hydrolysis of peptide bonds in substrates containing five or more amino acids, preferentially with Ala in P1', and Pro in P2'.. Inhibited by ethylene glycol-bis(2-aminoethylether)-N,N,N,N-tetraacetic acid (EGTA), ethylenediaminetetraacetic acid (EDTA) and o-phenanthroline. Its function is as follows. Metalloprotease. The protein is Zinc metalloproteinase nas-8 of Steinernema carpocapsae (Entomopathogenic nematode).